The sequence spans 160 residues: Glyoxalase domain-containing protein 5 (160 aa).

Residues 37–157 enclose the VOC domain; sequence RLDHIVMTVK…DRNLIEVSNY (121 aa).

This sequence belongs to the glyoxalase I family.

This Homo sapiens (Human) protein is Glyoxalase domain-containing protein 5 (GLOD5).